Consider the following 99-residue polypeptide: UPF0213 protein SP_1535 (99 aa).

In terms of domain architecture, GIY-YIG spans 3–78 (HKAYMYVLEC…KRKKRPQKEE (76 aa)).

This sequence belongs to the UPF0213 family.

This is UPF0213 protein SP_1535 from Streptococcus pneumoniae serotype 4 (strain ATCC BAA-334 / TIGR4).